The sequence spans 150 residues: 3-hydroxyacyl-[acyl-carrier-protein] dehydratase FabZ (150 aa).

The active site involves His-54.

This sequence belongs to the thioester dehydratase family. FabZ subfamily.

It localises to the cytoplasm. The catalysed reaction is a (3R)-hydroxyacyl-[ACP] = a (2E)-enoyl-[ACP] + H2O. Involved in unsaturated fatty acids biosynthesis. Catalyzes the dehydration of short chain beta-hydroxyacyl-ACPs and long chain saturated and unsaturated beta-hydroxyacyl-ACPs. This Vibrio atlanticus (strain LGP32) (Vibrio splendidus (strain Mel32)) protein is 3-hydroxyacyl-[acyl-carrier-protein] dehydratase FabZ.